The chain runs to 446 residues: Probable glycine dehydrogenase (decarboxylating) subunit 1 (446 aa).

The protein belongs to the GcvP family. N-terminal subunit subfamily. The glycine cleavage system is composed of four proteins: P, T, L and H. In this organism, the P 'protein' is a heterodimer of two subunits.

It catalyses the reaction N(6)-[(R)-lipoyl]-L-lysyl-[glycine-cleavage complex H protein] + glycine + H(+) = N(6)-[(R)-S(8)-aminomethyldihydrolipoyl]-L-lysyl-[glycine-cleavage complex H protein] + CO2. The glycine cleavage system catalyzes the degradation of glycine. The P protein binds the alpha-amino group of glycine through its pyridoxal phosphate cofactor; CO(2) is released and the remaining methylamine moiety is then transferred to the lipoamide cofactor of the H protein. This is Probable glycine dehydrogenase (decarboxylating) subunit 1 from Desulforamulus reducens (strain ATCC BAA-1160 / DSM 100696 / MI-1) (Desulfotomaculum reducens).